A 241-amino-acid polypeptide reads, in one-letter code: Cysteine-rich secretory protein 3 (241 aa).

Residues 1-19 form the signal peptide; that stretch reads MALMLVLFFLAAVLPPSLL. In terms of domain architecture, SCP spans 44-170; that stretch reads SKHNQLRRKV…PLRYFYVCRY (127 aa). N118, N132, and N175 each carry an N-linked (GlcNAc...) asparagine glycan. Disulfide bonds link C194-C201, C197-C206, C210-C241, C219-C235, and C226-C239. One can recognise a ShKT domain in the interval 210-241; it reads CQYKDMSFWCKRLEYVCKHPGLKKRCLATCQC.

This sequence belongs to the CRISP family. Interacts with A1BG. Interacts with KNG1 isoform LMW. As to expression, expressed in submandibular gland.

The protein resides in the cytoplasmic vesicle. The protein localises to the secretory vesicle. Its function is as follows. This protein is supposed to help spermatozoa undergo functional maturation while they move from the testis to the ductus deferens. The sequence is that of Cysteine-rich secretory protein 3 (Crisp3) from Mus musculus (Mouse).